The sequence spans 541 residues: Chaperonin GroEL 1 (541 aa).

Residues 29–32, 86–90, G413, 478–480, and D494 contribute to the ATP site; these read TLGP, DGTTT, and NAA. Positions 520–541 are disordered; that stretch reads VVEKPAEAEDDGHGHGHGHHHH. Basic and acidic residues predominate over residues 523–533; it reads KPAEAEDDGHG.

Belongs to the chaperonin (HSP60) family. As to quaternary structure, forms a cylinder of 14 subunits composed of two heptameric rings stacked back-to-back. Interacts with the co-chaperonin GroES.

It localises to the cytoplasm. It catalyses the reaction ATP + H2O + a folded polypeptide = ADP + phosphate + an unfolded polypeptide.. Together with its co-chaperonin GroES, plays an essential role in assisting protein folding. The GroEL-GroES system forms a nano-cage that allows encapsulation of the non-native substrate proteins and provides a physical environment optimized to promote and accelerate protein folding. This is Chaperonin GroEL 1 from Mycolicibacterium gilvum (strain PYR-GCK) (Mycobacterium gilvum (strain PYR-GCK)).